Here is a 285-residue protein sequence, read N- to C-terminus: uncharacterized protein (285 aa).

The helical transmembrane segment at 197–217 (PTIGALLSLVSAFFSFIPFLM) threads the bilayer.

Its subcellular location is the membrane. This is an uncharacterized protein from Saccharomyces cerevisiae (strain ATCC 204508 / S288c) (Baker's yeast).